A 517-amino-acid polypeptide reads, in one-letter code: Cytochrome P450 1A1 (517 aa).

The mitochondrial targeting signal stretch occupies residues 34 to 45 (WQPRVPKGLKSP). Residue Ser-72 is glycosylated (O-linked (GlcNAc) serine). Position 229 (Phe-229) interacts with substrate. Residue Cys-462 participates in heme binding.

The protein belongs to the cytochrome P450 family. In terms of assembly, interacts with cytosolic chaperones HSP70 and HSP90; this interaction is required for initial targeting to mitochondria. Interacts (via mitochondrial targeting signal) with TOMM40 (via N-terminus); this interaction is required for translocation across the mitochondrial outer membrane. Heme serves as cofactor.

Its subcellular location is the endoplasmic reticulum membrane. It is found in the mitochondrion inner membrane. The protein resides in the microsome membrane. It localises to the cytoplasm. It catalyses the reaction an organic molecule + reduced [NADPH--hemoprotein reductase] + O2 = an alcohol + oxidized [NADPH--hemoprotein reductase] + H2O + H(+). It carries out the reaction estrone + reduced [NADPH--hemoprotein reductase] + O2 = 2-hydroxyestrone + oxidized [NADPH--hemoprotein reductase] + H2O + H(+). The catalysed reaction is estrone + reduced [NADPH--hemoprotein reductase] + O2 = 4-hydroxyestrone + oxidized [NADPH--hemoprotein reductase] + H2O + H(+). The enzyme catalyses estrone + reduced [NADPH--hemoprotein reductase] + O2 = 6alpha-hydroxyestrone + oxidized [NADPH--hemoprotein reductase] + H2O + H(+). It catalyses the reaction estrone + reduced [NADPH--hemoprotein reductase] + O2 = 15alpha-hydroxyestrone + oxidized [NADPH--hemoprotein reductase] + H2O + H(+). It carries out the reaction estrone + reduced [NADPH--hemoprotein reductase] + O2 = 16alpha-hydroxyestrone + oxidized [NADPH--hemoprotein reductase] + H2O + H(+). The catalysed reaction is 17beta-estradiol + reduced [NADPH--hemoprotein reductase] + O2 = 2-hydroxy-17beta-estradiol + oxidized [NADPH--hemoprotein reductase] + H2O + H(+). The enzyme catalyses 17beta-estradiol + reduced [NADPH--hemoprotein reductase] + O2 = 4-hydroxy-17beta-estradiol + oxidized [NADPH--hemoprotein reductase] + H2O + H(+). It catalyses the reaction 17beta-estradiol + reduced [NADPH--hemoprotein reductase] + O2 = 6alpha-hydroxy-17beta-estradiol + oxidized [NADPH--hemoprotein reductase] + H2O + H(+). It carries out the reaction 17beta-estradiol + reduced [NADPH--hemoprotein reductase] + O2 = 7alpha-hydroxy-17beta-estradiol + oxidized [NADPH--hemoprotein reductase] + H2O + H(+). The catalysed reaction is 17beta-estradiol + reduced [NADPH--hemoprotein reductase] + O2 = 15alpha-hydroxy-17beta-estradiol + oxidized [NADPH--hemoprotein reductase] + H2O + H(+). The enzyme catalyses (5Z,8Z,11Z)-eicosatrienoate + reduced [NADPH--hemoprotein reductase] + O2 = 19-hydroxy-(5Z,8Z,11Z)-eicosatrienoate + oxidized [NADPH--hemoprotein reductase] + H2O + H(+). It catalyses the reaction (5Z,8Z,11Z,14Z)-eicosatetraenoate + reduced [NADPH--hemoprotein reductase] + O2 = 16-hydroxy-(5Z,8Z,11Z,14Z)-eicosatetraenoate + oxidized [NADPH--hemoprotein reductase] + H2O + H(+). It carries out the reaction (5Z,8Z,11Z,14Z)-eicosatetraenoate + reduced [NADPH--hemoprotein reductase] + O2 = 17-hydroxy-(5Z,8Z,11Z,14Z)-eicosatetraenoate + oxidized [NADPH--hemoprotein reductase] + H2O + H(+). The catalysed reaction is (5Z,8Z,11Z,14Z)-eicosatetraenoate + reduced [NADPH--hemoprotein reductase] + O2 = 18-hydroxy-(5Z,8Z,11Z,14Z)-eicosatetraenoate + oxidized [NADPH--hemoprotein reductase] + H2O + H(+). The enzyme catalyses (5Z,8Z,11Z,14Z)-eicosatetraenoate + reduced [NADPH--hemoprotein reductase] + O2 = 19-hydroxy-(5Z,8Z,11Z,14Z)-eicosatetraenoate + oxidized [NADPH--hemoprotein reductase] + H2O + H(+). It catalyses the reaction (5Z,8Z,11Z,14Z,17Z)-eicosapentaenoate + reduced [NADPH--hemoprotein reductase] + O2 = 19-hydroxy-(5Z,8Z,11Z,14Z,17Z)-eicosapentaenoate + oxidized [NADPH--hemoprotein reductase] + H2O + H(+). It carries out the reaction (5Z,8Z,11Z,14Z)-eicosatetraenoate + reduced [NADPH--hemoprotein reductase] + O2 = (8R,9S)-epoxy-(5Z,11Z,14Z)-eicosatrienoate + oxidized [NADPH--hemoprotein reductase] + H2O + H(+). The catalysed reaction is (5Z,8Z,11Z,14Z)-eicosatetraenoate + reduced [NADPH--hemoprotein reductase] + O2 = (11R,12S)-epoxy-(5Z,8Z,14Z)-eicosatrienoate + oxidized [NADPH--hemoprotein reductase] + H2O + H(+). The enzyme catalyses (5Z,8Z,11Z,14Z)-eicosatetraenoate + reduced [NADPH--hemoprotein reductase] + O2 = (14S,15R)-epoxy-(5Z,8Z,11Z)-eicosatrienoate + oxidized [NADPH--hemoprotein reductase] + H2O + H(+). It catalyses the reaction (5Z,8Z,11Z,14Z)-eicosatetraenoate + reduced [NADPH--hemoprotein reductase] + O2 = (14R,15S)-epoxy-(5Z,8Z,11Z)-eicosatrienoate + oxidized [NADPH--hemoprotein reductase] + H2O + H(+). It carries out the reaction (5Z,8Z,11Z,14Z,17Z)-eicosapentaenoate + reduced [NADPH--hemoprotein reductase] + O2 = (17R,18S)-epoxy-(5Z,8Z,11Z,14Z)-eicosatetraenoate + oxidized [NADPH--hemoprotein reductase] + H2O + H(+). The catalysed reaction is (4Z,7Z,10Z,13Z,16Z,19Z)-docosahexaenoate + reduced [NADPH--hemoprotein reductase] + O2 = (19S,20R)-epoxy-(4Z,7Z,10Z,13Z,16Z)-docosapentaenoate + oxidized [NADPH--hemoprotein reductase] + H2O + H(+). The enzyme catalyses (4Z,7Z,10Z,13Z,16Z,19Z)-docosahexaenoate + reduced [NADPH--hemoprotein reductase] + O2 = (19R,20S)-epoxy-(4Z,7Z,10Z,13Z,16Z)-docosapentaenoate + oxidized [NADPH--hemoprotein reductase] + H2O + H(+). It catalyses the reaction all-trans-retinol + reduced [NADPH--hemoprotein reductase] + O2 = all-trans-retinal + oxidized [NADPH--hemoprotein reductase] + 2 H2O + H(+). It carries out the reaction all-trans-retinal + reduced [NADPH--hemoprotein reductase] + O2 = all-trans-retinoate + oxidized [NADPH--hemoprotein reductase] + H2O + 2 H(+). The catalysed reaction is (13S)-hydroperoxy-(9Z,11E)-octadecadienoate = 13-oxo-(9Z,11E)-octadecadienoate + H2O. The enzyme catalyses (12S)-hydroperoxy-(5Z,8Z,10E,14Z)-eicosatetraenoate = 12-oxo-(5Z,8Z,10E,14Z)-eicosatetraenoate + H2O. It catalyses the reaction (15S)-hydroperoxy-(5Z,8Z,11Z,13E)-eicosatetraenoate = 15-oxo-(5Z,8Z,11Z,13E)-eicosatetraenoate + H2O. It carries out the reaction (5S)-hydroperoxy-(6E,8Z,11Z,14Z)-eicosatetraenoate = 5-oxo-(6E,8Z,11Z,14Z)-eicosatetraenoate + H2O. It functions in the pathway steroid hormone biosynthesis. It participates in lipid metabolism; fatty acid metabolism. The protein operates within cofactor metabolism; retinol metabolism. In terms of biological role, a cytochrome P450 monooxygenase involved in the metabolism of various endogenous substrates, including fatty acids, steroid hormones and vitamins. Mechanistically, uses molecular oxygen inserting one oxygen atom into a substrate, and reducing the second into a water molecule, with two electrons provided by NADPH via cytochrome P450 reductase (CPR; NADPH-ferrihemoprotein reductase). Catalyzes the hydroxylation of carbon-hydrogen bonds. Exhibits high catalytic activity for the formation of hydroxyestrogens from estrone (E1) and 17beta-estradiol (E2), namely 2-hydroxy E1 and E2, as well as D-ring hydroxylated E1 and E2 at the C15alpha and C16alpha positions. Displays different regioselectivities for polyunsaturated fatty acids (PUFA) hydroxylation. Catalyzes the epoxidation of double bonds of certain PUFA. Converts arachidonic acid toward epoxyeicosatrienoic acid (EET) regioisomers, 8,9-, 11,12-, and 14,15-EET, that function as lipid mediators in the vascular system. Displays an absolute stereoselectivity in the epoxidation of eicosapentaenoic acid (EPA) producing the 17(R),18(S) enantiomer. May play an important role in all-trans retinoic acid biosynthesis in extrahepatic tissues. Catalyzes two successive oxidative transformation of all-trans retinol to all-trans retinal and then to the active form all-trans retinoic acid. May also participate in eicosanoids metabolism by converting hydroperoxide species into oxo metabolites (lipoxygenase-like reaction, NADPH-independent). The sequence is that of Cytochrome P450 1A1 (CYP1A1) from Felis catus (Cat).